Consider the following 322-residue polypeptide: Ferredoxin--NADP reductase (322 aa).

Glu-37, Gln-45, Tyr-50, Ile-91, Phe-128, and Asp-290 together coordinate FAD.

The protein belongs to the ferredoxin--NADP reductase type 2 family. As to quaternary structure, homodimer. It depends on FAD as a cofactor.

The enzyme catalyses 2 reduced [2Fe-2S]-[ferredoxin] + NADP(+) + H(+) = 2 oxidized [2Fe-2S]-[ferredoxin] + NADPH. This is Ferredoxin--NADP reductase from Malacoplasma penetrans (strain HF-2) (Mycoplasma penetrans).